Consider the following 281-residue polypeptide: sn-glycerol-3-phosphate transport system permease protein UgpE (281 aa).

6 consecutive transmembrane segments (helical) span residues 16 to 36, 85 to 105, 113 to 133, 142 to 162, 202 to 222, and 247 to 267; these read LILG…AATL, FSIT…IVWF, FFWM…FPTV, LDSY…TFLF, ALFV…LLII, and WNQV…IVLA. An ABC transmembrane type-1 domain is found at 77-268; it reads MLNSFIMAFS…IPPVVIVLAM (192 aa).

Belongs to the binding-protein-dependent transport system permease family. UgpAE subfamily. As to quaternary structure, the complex is composed of two ATP-binding proteins (UgpC), two transmembrane proteins (UgpA and UgpE) and a solute-binding protein (UgpB).

The protein resides in the cell inner membrane. In terms of biological role, part of the ABC transporter complex UgpBAEC involved in sn-glycerol-3-phosphate (G3P) import. Probably responsible for the translocation of the substrate across the membrane. The protein is sn-glycerol-3-phosphate transport system permease protein UgpE (ugpE) of Salmonella choleraesuis (strain SC-B67).